Here is a 216-residue protein sequence, read N- to C-terminus: 3-keto-L-gulonate-6-phosphate decarboxylase UlaD (216 aa).

Aspartate 11 is a substrate binding site. Residues glutamate 33 and aspartate 62 each contribute to the Mg(2+) site. Position 192 (arginine 192) interacts with substrate.

It belongs to the HPS/KGPDC family. KGPDC subfamily. In terms of assembly, homodimer. Mg(2+) is required as a cofactor.

The catalysed reaction is 3-dehydro-L-gulonate 6-phosphate + H(+) = L-xylulose 5-phosphate + CO2. It functions in the pathway cofactor degradation; L-ascorbate degradation; D-xylulose 5-phosphate from L-ascorbate: step 2/4. Its function is as follows. Catalyzes the decarboxylation of 3-keto-L-gulonate-6-P into L-xylulose-5-P. Is involved in the anaerobic L-ascorbate utilization. This Escherichia coli O17:K52:H18 (strain UMN026 / ExPEC) protein is 3-keto-L-gulonate-6-phosphate decarboxylase UlaD.